The chain runs to 339 residues: tRNA N6-adenosine threonylcarbamoyltransferase (339 aa).

Fe cation-binding residues include His117 and His121. Substrate is bound by residues 140-144 (VVSGG), Asp173, Gly186, and Asn279. Asp307 contributes to the Fe cation binding site.

It belongs to the KAE1 / TsaD family. The cofactor is Fe(2+).

The protein localises to the cytoplasm. The enzyme catalyses L-threonylcarbamoyladenylate + adenosine(37) in tRNA = N(6)-L-threonylcarbamoyladenosine(37) in tRNA + AMP + H(+). Functionally, required for the formation of a threonylcarbamoyl group on adenosine at position 37 (t(6)A37) in tRNAs that read codons beginning with adenine. Is involved in the transfer of the threonylcarbamoyl moiety of threonylcarbamoyl-AMP (TC-AMP) to the N6 group of A37, together with TsaE and TsaB. TsaD likely plays a direct catalytic role in this reaction. The chain is tRNA N6-adenosine threonylcarbamoyltransferase from Syntrophomonas wolfei subsp. wolfei (strain DSM 2245B / Goettingen).